The primary structure comprises 785 residues: Ribosome biogenesis protein BOP1 homolog (785 aa).

Positions 1-11 (MTKKLTIKRKV) are enriched in basic residues. Positions 1–160 (MTKKLTIKRK…DSDTSDEEDI (160 aa)) are disordered. 3 stretches are compositionally biased toward acidic residues: residues 45 to 54 (EDSTDDEGID), 61 to 73 (SSEDLEFESDEEG), and 85 to 102 (SGDDDEESAEDEEEEDDA). Basic and acidic residues predominate over residues 103–112 (DAKKSSKNND). A compositionally biased stretch (acidic residues) spans 150-159 (ADSDTSDEED). WD repeat units follow at residues 446-487 (GHTD…RTIE), 489-527 (EDVVRCVAWCPNAKLSIIAVATGSRLLLVNPKVGDKLLV), 571-613 (THFK…SQIP), 616-654 (KSKGLIQCVLFHPVKPCFFVATQHNIRIYDLVKQELIKK), 657-696 (TNSKWISGMSIHPKGDNLLVSTYDKKMLWFDLDLSTKPYQ), 700-739 (LHRNAVRSVAFHLRYPLFASGSDDQAVIVSHGMVYNDLLQ), and 755-785 (REEFGVLDVNWHPVQPWVFSTGADCTIRLFT).

Belongs to the WD repeat BOP1/ERB1 family.

It localises to the nucleus. Its subcellular location is the nucleolus. The protein resides in the nucleoplasm. Functionally, required for maturation of ribosomal RNAs and formation of the large ribosomal subunit. In Drosophila persimilis (Fruit fly), this protein is Ribosome biogenesis protein BOP1 homolog.